A 106-amino-acid polypeptide reads, in one-letter code: Large ribosomal subunit protein eL42A (106 aa).

An N6-methyllysine; by RKM3 modification is found at Lys-40. Lys-55 is modified (N6-methyllysine; by RKM4).

The protein belongs to the eukaryotic ribosomal protein eL42 family. Component of the large ribosomal subunit (LSU). Mature yeast ribosomes consist of a small (40S) and a large (60S) subunit. The 40S small subunit contains 1 molecule of ribosomal RNA (18S rRNA) and 33 different proteins (encoded by 57 genes). The large 60S subunit contains 3 rRNA molecules (25S, 5.8S and 5S rRNA) and 46 different proteins (encoded by 81 genes). In wild-type cells, 78% of L42 is monomethylated at both Lys-40 and Lys-55, and 22% are a mixture of species with either residue monomethylated.

Its subcellular location is the cytoplasm. Component of the ribosome, a large ribonucleoprotein complex responsible for the synthesis of proteins in the cell. The small ribosomal subunit (SSU) binds messenger RNAs (mRNAs) and translates the encoded message by selecting cognate aminoacyl-transfer RNA (tRNA) molecules. The large subunit (LSU) contains the ribosomal catalytic site termed the peptidyl transferase center (PTC), which catalyzes the formation of peptide bonds, thereby polymerizing the amino acids delivered by tRNAs into a polypeptide chain. The nascent polypeptides leave the ribosome through a tunnel in the LSU and interact with protein factors that function in enzymatic processing, targeting, and the membrane insertion of nascent chains at the exit of the ribosomal tunnel. The protein is Large ribosomal subunit protein eL42A of Saccharomyces cerevisiae (strain ATCC 204508 / S288c) (Baker's yeast).